Here is a 340-residue protein sequence, read N- to C-terminus: uncharacterized protein (340 aa).

The disordered stretch occupies residues 284 to 340 (DHSTPTNYQQETPASQQQLDQENEPIKPSKKSNSSSLPRGTTQPKSNSINRVSKLID). Composition is skewed to polar residues over residues 286 to 303 (STPT…QQLD) and 320 to 334 (LPRG…SINR).

This is an uncharacterized protein from Mycoplasma genitalium (strain ATCC 33530 / DSM 19775 / NCTC 10195 / G37) (Mycoplasmoides genitalium).